We begin with the raw amino-acid sequence, 208 residues long: RxLR effector protein Avr1 (208 aa).

Residues 1–22 (MGLMHRVLLLATFALLCMHAKA) form the signal peptide. Positions 41–54 (RQLRTATMSDDEAR) match the RxLR-dEER motif. The tract at residues 70–92 (KIESWIQNKVTDDFVLSELKLVR) is W1-motif. A linker region ln1 region spans residues 93 to 110 (LPGTSLADDPNFKLFQKF). The tract at residues 111–136 (KIGGWLEEKATTTKAWENLGLDSLPF) is W2-motif. A Y-motif region spans residues 137 to 157 (DQVSKIDEFKTYTQYVTVLNK). A linker region ln2 region spans residues 158-170 (KASKLDIDQWHGL). A T-region region spans residues 170–208 (LLSGGSPEELMAKAMILRTLGRDVLERRVMLGGHVVVPF).

Belongs to the RxLR effector family. As to quaternary structure, interacts with host exocyst component Sec5.

The protein resides in the secreted. It is found in the host cytoplasm. The protein localises to the host nucleus. It localises to the host peroxisome. In terms of biological role, secreted effector that acts as an elicitor of hypersensitive response (HR) specifically on plants carrying defense protein R1, through its interaction with this protein. Also acts as a virulence factor that promotes colonization and suppresses cell death induced by CRN2 as well as callose deposition, a hallmark of basal defense. Interacts with host exocyst component Sec5 and thereby disturbs vesicle trafficking, a cellular process that is important for basal defense. By targeting and stabilizing Sec5 in the cytoplasm, the exocyst complex is thus out of balance and not able to mediate the focal secretion of PR-1 and callose. In Phytophthora infestans (strain T30-4) (Potato late blight agent), this protein is RxLR effector protein Avr1.